The chain runs to 354 residues: DNA repair protein rhp57 (354 aa).

100–107 (GESGSGKS) is a binding site for ATP.

Belongs to the RecA family.

Its subcellular location is the nucleus. Functionally, involved in recombination DNA repair and in the repair of gamma-ray-induced damage. In Schizosaccharomyces pombe (strain 972 / ATCC 24843) (Fission yeast), this protein is DNA repair protein rhp57 (rhp57).